A 380-amino-acid chain; its full sequence is Cytochrome b (380 aa).

A run of 4 helical transmembrane segments spans residues 34 to 54 (FGWL…FLAM), 78 to 99 (WLLR…YFHI), 114 to 134 (WNIG…GYVL), and 179 to 199 (FFTF…IHLL). Histidine 84 and histidine 98 together coordinate heme b. The heme b site is built by histidine 183 and histidine 197. Residue histidine 202 participates in a ubiquinone binding. The next 4 helical transmembrane spans lie at 227 to 247 (FKDL…STFA), 289 to 309 (LGGV…PIIH), 321 to 341 (AAKA…WIGG), and 348 to 368 (FISI…LIIP).

Belongs to the cytochrome b family. As to quaternary structure, the cytochrome bc1 complex contains 3 respiratory subunits (MT-CYB, CYC1 and UQCRFS1), 2 core proteins (UQCRC1 and UQCRC2) and probably 6 low-molecular weight proteins. Heme b serves as cofactor.

It localises to the mitochondrion inner membrane. Component of the ubiquinol-cytochrome c reductase complex (complex III or cytochrome b-c1 complex) that is part of the mitochondrial respiratory chain. The b-c1 complex mediates electron transfer from ubiquinol to cytochrome c. Contributes to the generation of a proton gradient across the mitochondrial membrane that is then used for ATP synthesis. The protein is Cytochrome b (mt-cyb) of Rana dybowskii (Dybovsky's frog).